An 87-amino-acid chain; its full sequence is Large ribosomal subunit protein bL31B-2/bL31B-3 (87 aa).

This sequence belongs to the bacterial ribosomal protein bL31 family. Type B subfamily. In terms of assembly, part of the 50S ribosomal subunit.

This chain is Large ribosomal subunit protein bL31B-2/bL31B-3 (rpmE2-2), found in Escherichia coli O157:H7.